The sequence spans 545 residues: Esterase-5B (545 aa).

Positions 1 to 19 are cleaved as a signal peptide; it reads MYCAKLILLLGCFWISSSA. Cysteine 84 and cysteine 103 are disulfide-bonded. An N-linked (GlcNAc...) asparagine glycan is attached at asparagine 113. The active-site Acyl-ester intermediate is the serine 207. A disulfide bond links cysteine 259 and cysteine 271. An N-linked (GlcNAc...) asparagine glycan is attached at asparagine 421. Histidine 467 functions as the Charge relay system in the catalytic mechanism. An N-linked (GlcNAc...) asparagine glycan is attached at asparagine 507. The cysteines at positions 515 and 536 are disulfide-linked.

This sequence belongs to the type-B carboxylesterase/lipase family. Homodimer.

The protein localises to the secreted. It catalyses the reaction a carboxylic ester + H2O = an alcohol + a carboxylate + H(+). The polypeptide is Esterase-5B (Est-5B) (Drosophila persimilis (Fruit fly)).